The primary structure comprises 443 residues: MDKKPLDTLISATGLWMSRTGMIHKIKHHEVSRSKIYIEMACGERLVVNNSRSSRTARALRHHKYRKTCRHCRVSDEDINNFLTKTSEEKTTVKVKVVSAPRVRKAMPKSVARAPKPLEATAQVPLSGSKPAPATPVSAPAQAPAPSTGSASATSASAQRMANSAAAPAAPVPTSAPALTKGQLDRLEGLLSPKDEISLDSEKPFRELESELLSRRKKDLKRIYAEERENYLGKLEREITKFFVDRGFLEIKSPILIPAEYVERMGINSDTELSKQVFRIDKNFCLRPMLAPNLYNYLRKLDRALPDPIKIFEIGPCYRKESDGKEHLEEFTMLNFCQMGSGCTRENLEAIITEFLNHLGIDFEIIGDSCMVYGNTLDVMHDDLELSSAVVGPVPLDREWGIDKPWIGAGFGLERLLKVMHGFKNIKRAARSESYYNGISTNL.

Residues 103-177 (VRKAMPKSVA…PAAPVPTSAP (75 aa)) are disordered. A compositionally biased stretch (low complexity) spans 131-177 (PAPATPVSAPAQAPAPSTGSASATSASAQRMANSAAAPAAPVPTSAP).

Belongs to the class-II aminoacyl-tRNA synthetase family.

It localises to the cytoplasm. The enzyme catalyses tRNA(Pyl) + L-pyrrolysine + ATP = L-pyrrolysyl-tRNA(Pyl) + AMP + diphosphate. Catalyzes the attachment of pyrrolysine to tRNA(Pyl). Pyrrolysine is a lysine derivative encoded by the termination codon UAG. This chain is Pyrrolysine--tRNA ligase, found in Methanosarcina acetivorans (strain ATCC 35395 / DSM 2834 / JCM 12185 / C2A).